The following is a 343-amino-acid chain: CRISPR-associated endonuclease Cas1 1 (343 aa).

3 residues coordinate Mn(2+): E166, H234, and E249.

This sequence belongs to the CRISPR-associated endonuclease Cas1 family. Homodimer, forms a heterotetramer with a Cas2 homodimer. Mg(2+) is required as a cofactor. The cofactor is Mn(2+).

In terms of biological role, CRISPR (clustered regularly interspaced short palindromic repeat), is an adaptive immune system that provides protection against mobile genetic elements (viruses, transposable elements and conjugative plasmids). CRISPR clusters contain spacers, sequences complementary to antecedent mobile elements, and target invading nucleic acids. CRISPR clusters are transcribed and processed into CRISPR RNA (crRNA). Acts as a dsDNA endonuclease. Involved in the integration of spacer DNA into the CRISPR cassette. The polypeptide is CRISPR-associated endonuclease Cas1 1 (Moorella thermoacetica (strain ATCC 39073 / JCM 9320)).